The chain runs to 135 residues: HTH-type transcriptional activator AarP (135 aa).

Residues 22-120 (SEILVWIEGN…GISPSLYRLS (99 aa)) enclose the HTH araC/xylS-type domain. 2 consecutive DNA-binding regions (H-T-H motif) follow at residues 39 to 60 (DDIA…RKIV) and 87 to 110 (VIDI…KAYL).

Functionally, transcriptional activator of 2'-N-acetyltransferase. This Providencia stuartii protein is HTH-type transcriptional activator AarP (aarP).